Reading from the N-terminus, the 896-residue chain is Valine--tRNA ligase (896 aa).

The 'HIGH' region motif lies at 43 to 53 (PNVTGSLHIGH). The 'KMSKS' region motif lies at 545–549 (KMSKS). K548 is a binding site for ATP. A coiled-coil region spans residues 831–857 (DLDAERARLAKGIAAAEKERDGLAARL).

This sequence belongs to the class-I aminoacyl-tRNA synthetase family. ValS type 1 subfamily. In terms of assembly, monomer.

It localises to the cytoplasm. The enzyme catalyses tRNA(Val) + L-valine + ATP = L-valyl-tRNA(Val) + AMP + diphosphate. Its function is as follows. Catalyzes the attachment of valine to tRNA(Val). As ValRS can inadvertently accommodate and process structurally similar amino acids such as threonine, to avoid such errors, it has a 'posttransfer' editing activity that hydrolyzes mischarged Thr-tRNA(Val) in a tRNA-dependent manner. The protein is Valine--tRNA ligase of Rhizorhabdus wittichii (strain DSM 6014 / CCUG 31198 / JCM 15750 / NBRC 105917 / EY 4224 / RW1) (Sphingomonas wittichii).